The primary structure comprises 1386 residues: DNA-directed RNA polymerase subunit beta'' (1386 aa).

Zn(2+)-binding residues include Cys-224, Cys-294, Cys-301, and Cys-304.

The protein belongs to the RNA polymerase beta' chain family. RpoC2 subfamily. In plastids the minimal PEP RNA polymerase catalytic core is composed of four subunits: alpha, beta, beta', and beta''. When a (nuclear-encoded) sigma factor is associated with the core the holoenzyme is formed, which can initiate transcription. The cofactor is Zn(2+).

The protein resides in the plastid. Its subcellular location is the chloroplast. The catalysed reaction is RNA(n) + a ribonucleoside 5'-triphosphate = RNA(n+1) + diphosphate. Its function is as follows. DNA-dependent RNA polymerase catalyzes the transcription of DNA into RNA using the four ribonucleoside triphosphates as substrates. The polypeptide is DNA-directed RNA polymerase subunit beta'' (Acorus calamus (Sweet flag)).